The primary structure comprises 84 residues: Acetylcholine receptor subunit alpha (84 aa).

2 cysteine pairs are disulfide-bonded: cysteine 7-cysteine 21 and cysteine 71-cysteine 72. Asparagine 20 carries an N-linked (GlcNAc...) asparagine glycan.

Belongs to the ligand-gated ion channel (TC 1.A.9) family. Acetylcholine receptor (TC 1.A.9.1) subfamily. Alpha-1/CHRNA1 sub-subfamily. In terms of assembly, one of the alpha chains that assemble within the acetylcholine receptor, a pentamer of two alpha chains, a beta, a delta, and a gamma (in immature muscle) or epsilon (in mature muscle) chains. The muscle heteropentamer composed of alpha-1, beta-1, delta, epsilon subunits interacts with the alpha-conotoxin ImII.

The protein resides in the postsynaptic cell membrane. It is found in the cell membrane. The catalysed reaction is K(+)(in) = K(+)(out). It catalyses the reaction Na(+)(in) = Na(+)(out). Functionally, upon acetylcholine binding, the AChR responds by an extensive change in conformation that affects all subunits and leads to opening of an ion-conducting channel across the plasma membrane. In Felis catus (Cat), this protein is Acetylcholine receptor subunit alpha (CHRNA1).